Reading from the N-terminus, the 410-residue chain is uncharacterized protein (410 aa).

Zn(2+) is bound at residue histidine 87. Aspartate 89 is an active-site residue. Residue aspartate 120 coordinates Zn(2+). Catalysis depends on glutamate 154, which acts as the Proton acceptor. Zn(2+) contacts are provided by glutamate 155, aspartate 184, and histidine 387.

Belongs to the peptidase M20A family. Zn(2+) serves as cofactor. Co(2+) is required as a cofactor.

This is an uncharacterized protein from Methanocaldococcus jannaschii (strain ATCC 43067 / DSM 2661 / JAL-1 / JCM 10045 / NBRC 100440) (Methanococcus jannaschii).